The sequence spans 419 residues: 3-isopropylmalate dehydratase large subunit (419 aa).

Residues C300, C360, and C363 each contribute to the [4Fe-4S] cluster site.

This sequence belongs to the aconitase/IPM isomerase family. LeuC type 2 subfamily. As to quaternary structure, heterodimer of LeuC and LeuD. Requires [4Fe-4S] cluster as cofactor.

It carries out the reaction (2R,3S)-3-isopropylmalate = (2S)-2-isopropylmalate. It functions in the pathway amino-acid biosynthesis; L-leucine biosynthesis; L-leucine from 3-methyl-2-oxobutanoate: step 2/4. Catalyzes the isomerization between 2-isopropylmalate and 3-isopropylmalate, via the formation of 2-isopropylmaleate. This is 3-isopropylmalate dehydratase large subunit from Acetivibrio thermocellus (strain ATCC 27405 / DSM 1237 / JCM 9322 / NBRC 103400 / NCIMB 10682 / NRRL B-4536 / VPI 7372) (Clostridium thermocellum).